The following is a 79-amino-acid chain: Acyl carrier protein (79 aa).

In terms of domain architecture, Carrier spans 2–77 (ESIEQRVKKI…QAIDYINSHG (76 aa)). Serine 37 carries the post-translational modification O-(pantetheine 4'-phosphoryl)serine.

The protein belongs to the acyl carrier protein (ACP) family. Post-translationally, 4'-phosphopantetheine is transferred from CoA to a specific serine of apo-ACP by AcpS. This modification is essential for activity because fatty acids are bound in thioester linkage to the sulfhydryl of the prosthetic group.

The protein localises to the cytoplasm. Its pathway is lipid metabolism; fatty acid biosynthesis. Carrier of the growing fatty acid chain in fatty acid biosynthesis. In Bordetella avium (strain 197N), this protein is Acyl carrier protein.